Reading from the N-terminus, the 860-residue chain is Leucine--tRNA ligase (860 aa).

The 'HIGH' region signature appears at 42-52; the sequence is PYPSGRLHMGH. The 'KMSKS' region motif lies at 619-623; sequence KMSKS. An ATP-binding site is contributed by Lys-622.

This sequence belongs to the class-I aminoacyl-tRNA synthetase family.

Its subcellular location is the cytoplasm. It carries out the reaction tRNA(Leu) + L-leucine + ATP = L-leucyl-tRNA(Leu) + AMP + diphosphate. In Yersinia pseudotuberculosis serotype I (strain IP32953), this protein is Leucine--tRNA ligase.